Consider the following 495-residue polypeptide: UDP-glycosyltransferase 73C11 (495 aa).

The active-site Proton acceptor is the His24. His24 serves as a coordination point for an anthocyanidin. Asp129 acts as the Charge relay in catalysis. Residues Gln358, His373, Trp376, Asn377, Ser378, and Glu381 each coordinate UDP-alpha-D-glucose. Gly396 lines the an anthocyanidin pocket. The UDP-alpha-D-glucose site is built by Asp397 and Gln398.

It belongs to the UDP-glycosyltransferase family.

It carries out the reaction oleanolate + UDP-alpha-D-glucose = oleanolate 3-O-beta-D-glucoside + UDP + H(+). In terms of biological role, catalyzes the transfer of a glucose (Glc) moiety from UDP-Glc to the C-3 position of the oleanane sapogenins oleanolate and hederagenin, and to the C-28 carboxylic group of the lupane sapogenin betulinate. The monoglucosylated hederagenin 3-O-beta-D-glucoside is a feeding deterrent of the yellow-striped flea beetle (Phyllotreta nemorum). In Barbarea vulgaris (Yellow rocket), this protein is UDP-glycosyltransferase 73C11.